The following is a 64-amino-acid chain: Endodeoxyribonuclease toxin RalR (64 aa).

The cofactor is Ca(2+). Mg(2+) serves as cofactor.

Inhibited by EDTA. In terms of biological role, toxic component of a type I toxin-antitoxin (TA) system. Upon overexpression inhibits growth and reduces colony-forming units in both the presence and absence of the Rac prophage, cells become filamentous. Has deoxyribonuclease activity (probably endonucleolytic), does not digest RNA. Its toxic effects are neutralized by sRNA antitoxin RalA, which is encoded in trans on the opposite DNA strand. Has RAL-like activity. This Escherichia coli (strain K12) protein is Endodeoxyribonuclease toxin RalR (ralR).